The sequence spans 607 residues: Chaperone protein dnaK (607 aa).

Residues 579-591 (KASETSNAKTNGK) are compositionally biased toward polar residues. Residues 579–607 (KASETSNAKTNGKASEKEDVIDADFKAQE) are disordered. A compositionally biased stretch (basic and acidic residues) spans 592 to 607 (ASEKEDVIDADFKAQE).

It belongs to the heat shock protein 70 family.

It localises to the plastid. The protein resides in the chloroplast. Functionally, acts as a chaperone. This is Chaperone protein dnaK from Cyanidioschyzon merolae (strain NIES-3377 / 10D) (Unicellular red alga).